The chain runs to 375 residues: Succinyl-diaminopimelate desuccinylase (375 aa).

Position 66 (His-66) interacts with Zn(2+). Residue Asp-68 is part of the active site. Asp-99 is a binding site for Zn(2+). The active-site Proton acceptor is the Glu-133. Residues Glu-134, Glu-162, and His-348 each contribute to the Zn(2+) site.

It belongs to the peptidase M20A family. DapE subfamily. Homodimer. The cofactor is Zn(2+). Requires Co(2+) as cofactor.

It carries out the reaction N-succinyl-(2S,6S)-2,6-diaminopimelate + H2O = (2S,6S)-2,6-diaminopimelate + succinate. It participates in amino-acid biosynthesis; L-lysine biosynthesis via DAP pathway; LL-2,6-diaminopimelate from (S)-tetrahydrodipicolinate (succinylase route): step 3/3. Its function is as follows. Catalyzes the hydrolysis of N-succinyl-L,L-diaminopimelic acid (SDAP), forming succinate and LL-2,6-diaminopimelate (DAP), an intermediate involved in the bacterial biosynthesis of lysine and meso-diaminopimelic acid, an essential component of bacterial cell walls. The protein is Succinyl-diaminopimelate desuccinylase of Cronobacter sakazakii (strain ATCC BAA-894) (Enterobacter sakazakii).